Consider the following 354-residue polypeptide: Methylthioribose-1-phosphate isomerase (354 aa).

Substrate-binding positions include 58–60 (RGA), Arg101, and Gln204. Asp245 functions as the Proton donor in the catalytic mechanism. 255–256 (NK) contacts substrate.

The protein belongs to the eIF-2B alpha/beta/delta subunits family. MtnA subfamily.

It carries out the reaction 5-(methylsulfanyl)-alpha-D-ribose 1-phosphate = 5-(methylsulfanyl)-D-ribulose 1-phosphate. Its pathway is amino-acid biosynthesis; L-methionine biosynthesis via salvage pathway; L-methionine from S-methyl-5-thio-alpha-D-ribose 1-phosphate: step 1/6. Catalyzes the interconversion of methylthioribose-1-phosphate (MTR-1-P) into methylthioribulose-1-phosphate (MTRu-1-P). The protein is Methylthioribose-1-phosphate isomerase of Stenotrophomonas maltophilia (strain R551-3).